Reading from the N-terminus, the 368-residue chain is tRNA/tmRNA (uracil-C(5))-methyltransferase (368 aa).

S-adenosyl-L-methionine-binding residues include Gln192, Tyr220, Asn225, Glu241, and Asp301. The Nucleophile role is filled by Cys326. Residue Glu360 is the Proton acceptor of the active site.

It belongs to the class I-like SAM-binding methyltransferase superfamily. RNA M5U methyltransferase family. TrmA subfamily.

It catalyses the reaction uridine(54) in tRNA + S-adenosyl-L-methionine = 5-methyluridine(54) in tRNA + S-adenosyl-L-homocysteine + H(+). It carries out the reaction uridine(341) in tmRNA + S-adenosyl-L-methionine = 5-methyluridine(341) in tmRNA + S-adenosyl-L-homocysteine + H(+). Its function is as follows. Dual-specificity methyltransferase that catalyzes the formation of 5-methyluridine at position 54 (m5U54) in all tRNAs, and that of position 341 (m5U341) in tmRNA (transfer-mRNA). This Actinobacillus pleuropneumoniae serotype 3 (strain JL03) protein is tRNA/tmRNA (uracil-C(5))-methyltransferase.